Reading from the N-terminus, the 66-residue chain is Large ribosomal subunit protein bL35 (66 aa).

A compositionally biased stretch (basic residues) spans 1 to 16; sequence MPKQKTHRASAKRFKR. A disordered region spans residues 1–22; sequence MPKQKTHRASAKRFKRTGSGGL.

The protein belongs to the bacterial ribosomal protein bL35 family.

This chain is Large ribosomal subunit protein bL35, found in Streptococcus suis (strain 05ZYH33).